The chain runs to 237 residues: Golgi anti-apoptotic protein (237 aa).

Residues 1 to 37 (MAMPSLSACSSIEDDFNYGSSVASASVHIRMAFLRKV) are Cytoplasmic-facing. The chain crosses the membrane as a helical span at residues 38–58 (YGILCLQFLLTTATTAVFLYF). Topologically, residues 59-67 (DCMRTFIQG) are lumenal. Residues 68–88 (SPVLILASMFGSIGLIFALTL) form a helical membrane-spanning segment. The Cytoplasmic segment spans residues 89-94 (HRHKHP). Residues 95–115 (LNLYLLCGFTLSESLTLASVV) form a helical membrane-spanning segment. Residue Thr116 is a topological domain, lumenal. The helical transmembrane segment at 117–137 (FYDVHVVMQAFMLTTAAFLAL) threads the bilayer. Topologically, residues 138 to 151 (TTYTLQSKRDFSKL) are cytoplasmic. The chain crosses the membrane as a helical span at residues 152–172 (GAGLFAALWILILSGLLGIFV). The Lumenal segment spans residues 173 to 174 (QN). The chain crosses the membrane as a helical span at residues 175–195 (ETVKLVLSAFGALVFCGFIIY). At 196-209 (DTHSLIHKLSPEEY) the chain is on the cytoplasmic side. Positions 210 to 230 (VLASINLYLDIINLFLHLLQL) form an intramembrane region, helical. The Cytoplasmic portion of the chain corresponds to 231–237 (LEVSNKK).

The protein belongs to the BI1 family. LFG subfamily.

The protein resides in the host Golgi apparatus membrane. In terms of biological role, may affect virulence through inhibition of apoptosis. This is Golgi anti-apoptotic protein (L6) from Vaccinia virus (strain LC16m0) (VACV).